The following is a 243-amino-acid chain: Peptidyl-tRNA hydrolase (243 aa).

TRNA is bound at residue Tyr-14. The Proton acceptor role is filled by His-19. Residues Tyr-64, Asn-66, and Asn-112 each coordinate tRNA. A compositionally biased stretch (basic and acidic residues) spans 190 to 207 (KAEEEKPRKEGKDGEKKP). The segment at 190–243 (KAEEEKPRKEGKDGEKKPAGQSHIRQARSSNQPKLPATGPMAEMLKKMFGNKGE) is disordered. Residues 212 to 222 (HIRQARSSNQP) are compositionally biased toward polar residues.

Belongs to the PTH family. Monomer.

It is found in the cytoplasm. The catalysed reaction is an N-acyl-L-alpha-aminoacyl-tRNA + H2O = an N-acyl-L-amino acid + a tRNA + H(+). In terms of biological role, hydrolyzes ribosome-free peptidyl-tRNAs (with 1 or more amino acids incorporated), which drop off the ribosome during protein synthesis, or as a result of ribosome stalling. Functionally, catalyzes the release of premature peptidyl moieties from peptidyl-tRNA molecules trapped in stalled 50S ribosomal subunits, and thus maintains levels of free tRNAs and 50S ribosomes. The chain is Peptidyl-tRNA hydrolase from Rhizobium etli (strain CIAT 652).